A 345-amino-acid polypeptide reads, in one-letter code: MNYKLFSPYTIKDVTLKNRIVMSPMCMYSSKNEDGQITNFHLIHYGTRAAGQVGLVMIEATAVLPEGRISNKDLGIWDDSLIEGLHKATTFIHDNGAKAAIQLAHAGRKAELETDALAPSAIPFNETMKMPIEMSKHQIKDTVLAFQQAAVRSKQAGFDVIEIHGAHGYLINEFLSPLTNKRTDEYGGSPENRYRFLREIIESINEVWNGPLFVRISANDYHPDGLTVQDYVQYTKWMKEQGVDLIDCSSGAVVPARIDVYPGYQVQYAKHIKEHANIATGAVGLITTGAQAEQILNNNEADLIFIGRELLRNPYFSRIAANELGFELEEPYQYERAPGKISTNK.

An FMN-binding site is contributed by 23 to 26 (SPMC). Position 28 (Y28) interacts with substrate. A60 and Q102 together coordinate FMN. Residue 164-167 (HGAH) coordinates substrate. FMN is bound by residues R215 and 307–308 (GR).

This sequence belongs to the NADH:flavin oxidoreductase/NADH oxidase family. NamA subfamily. Homotetramer. The cofactor is FMN.

The enzyme catalyses A + NADPH + H(+) = AH2 + NADP(+). Catalyzes the reduction of the double bond of an array of alpha,beta-unsaturated aldehydes and ketones. It also reduces the nitro group of nitroester and nitroaromatic compounds. It could have a role in detoxification processes. The sequence is that of NADPH dehydrogenase from Bacillus cereus (strain AH187).